We begin with the raw amino-acid sequence, 519 residues long: Glucoamylase GLA1 (519 aa).

Positions 1 to 27 (MRFGVLISVFVAIVSALPLQEGPLNKR) are cleaved as a signal peptide. N-linked (GlcNAc...) asparagine glycans are attached at residues Asn115 and Asn127. Trp166 lines the substrate pocket. The N-linked (GlcNAc...) asparagine glycan is linked to Asn205. The Proton acceptor role is filled by Asp234. Residue Glu237 is the Proton donor of the active site.

This sequence belongs to the glycosyl hydrolase 15 family.

The catalysed reaction is Hydrolysis of terminal (1-&gt;4)-linked alpha-D-glucose residues successively from non-reducing ends of the chains with release of beta-D-glucose.. The polypeptide is Glucoamylase GLA1 (GLA1) (Saccharomycopsis fibuligera (Yeast)).